The following is a 35-amino-acid chain: Conotoxin Cal6.1f (35 aa).

Positions 1–8 (GLIRPSKR) are excised as a propeptide. 3 disulfides stabilise this stretch: cysteine 9–cysteine 25, cysteine 16–cysteine 29, and cysteine 24–cysteine 34.

This sequence belongs to the conotoxin O1 superfamily. As to expression, expressed by the venom duct.

Its subcellular location is the secreted. Probable neurotoxin with unknown target. Possibly targets ion channels. The polypeptide is Conotoxin Cal6.1f (Californiconus californicus (California cone)).